We begin with the raw amino-acid sequence, 313 residues long: Pseudouridine kinase (313 aa).

The protein belongs to the carbohydrate kinase PfkB family.

The enzyme catalyses pseudouridine + ATP = psi-UMP + ADP + H(+). In terms of biological role, catalyzes the phosphorylation of pseudouridine to pseudouridine 5'-phosphate (PsiMP). The protein is Pseudouridine kinase (psuK) of Escherichia coli (strain K12).